A 179-amino-acid chain; its full sequence is Bifunctional protein PyrR (179 aa).

Positions 100 to 112 (VILVDDVLFTGRT) match the PRPP-binding motif.

The protein belongs to the purine/pyrimidine phosphoribosyltransferase family. PyrR subfamily. In terms of assembly, homodimer and homohexamer; in equilibrium.

The catalysed reaction is UMP + diphosphate = 5-phospho-alpha-D-ribose 1-diphosphate + uracil. Its function is as follows. Regulates transcriptional attenuation of the pyrimidine nucleotide (pyr) operon by binding in a uridine-dependent manner to specific sites on pyr mRNA. This disrupts an antiterminator hairpin in the RNA and favors formation of a downstream transcription terminator, leading to a reduced expression of downstream genes. Functionally, also displays a weak uracil phosphoribosyltransferase activity which is not physiologically significant. The chain is Bifunctional protein PyrR from Geobacillus thermodenitrificans (strain NG80-2).